The primary structure comprises 482 residues: Aspartyl/glutamyl-tRNA(Asn/Gln) amidotransferase subunit B (482 aa).

It belongs to the GatB/GatE family. GatB subfamily. As to quaternary structure, heterotrimer of A, B and C subunits.

The enzyme catalyses L-glutamyl-tRNA(Gln) + L-glutamine + ATP + H2O = L-glutaminyl-tRNA(Gln) + L-glutamate + ADP + phosphate + H(+). The catalysed reaction is L-aspartyl-tRNA(Asn) + L-glutamine + ATP + H2O = L-asparaginyl-tRNA(Asn) + L-glutamate + ADP + phosphate + 2 H(+). In terms of biological role, allows the formation of correctly charged Asn-tRNA(Asn) or Gln-tRNA(Gln) through the transamidation of misacylated Asp-tRNA(Asn) or Glu-tRNA(Gln) in organisms which lack either or both of asparaginyl-tRNA or glutaminyl-tRNA synthetases. The reaction takes place in the presence of glutamine and ATP through an activated phospho-Asp-tRNA(Asn) or phospho-Glu-tRNA(Gln). This chain is Aspartyl/glutamyl-tRNA(Asn/Gln) amidotransferase subunit B, found in Azotobacter vinelandii (strain DJ / ATCC BAA-1303).